Consider the following 708-residue polypeptide: Exocyst complex component 5 (708 aa).

The residue at position 2 (alanine 2) is an N-acetylalanine. The stretch at 40–101 (KRLLEEFVNH…AFQHFQELDE (62 aa)) forms a coiled coil. Residues threonine 122, threonine 395, and threonine 405 each carry the phosphothreonine modification. Serine 412 is modified (phosphoserine).

This sequence belongs to the SEC10 family. As to quaternary structure, the exocyst complex is composed of EXOC1, EXOC2, EXOC3, EXOC4, EXOC5, EXOC6, EXOC7 and EXOC8. Interacts with EXOC3L1. In terms of tissue distribution, ubiquitous.

It localises to the cytoplasm. The protein localises to the midbody. Its function is as follows. Component of the exocyst complex involved in the docking of exocytic vesicles with fusion sites on the plasma membrane. This chain is Exocyst complex component 5 (EXOC5), found in Homo sapiens (Human).